The following is a 638-amino-acid chain: Transcription activator MSS11 (638 aa).

The tract at residues 1 to 26 is disordered; it reads MSKPPPQHQSKNANNSLSSPVSDKQS. The span at 8-26 shows a compositional bias: polar residues; it reads HQSKNANNSLSSPVSDKQS. One can recognise a LisH domain in the interval 29 to 61; the sequence is SRQLLLAHLYNYFKTNGLEETAQALLIECNNTI. Disordered regions lie at residues 187–216, 270–331, 362–515, and 572–638; these read LSTT…EQLQ, QQRQ…NAVS, NNQQ…NNNK, and MPPN…PGYE. Over residues 283–295 the composition is skewed to polar residues; sequence STSSQKSPVINNG. 3 stretches are compositionally biased toward low complexity: residues 296–328, 369–387, and 394–408; these read QPQQ…NNTN, SQQQ…QSSP, and QPKN…TTTS. Residues 412-423 show a composition bias toward basic residues; the sequence is KSSRKQQPKNSR. Low complexity predominate over residues 425–465; that stretch reads QSVQQQQQQQPQQQPQQSQQMSTSSQSFTAANNSNNVNNTF. Polar residues predominate over residues 466-481; that stretch reads DISPQIQDQGMLSTKE. Composition is skewed to low complexity over residues 495-515 and 572-585; these read SQPQ…NNNK and MPPN…PSQS. The segment covering 586-595 has biased composition (gly residues); that stretch reads GDGGGGGGGS.

It belongs to the MSS11 family. As to quaternary structure, interacts with FLO8.

Its subcellular location is the cytoplasm. The protein resides in the nucleus. Functionally, transcription factor that regulates pseudohyphal differentiation, invasive growth, floculation, adhesion and starch metabolism in response to nutrient availability. The polypeptide is Transcription activator MSS11 (MSS11) (Candida albicans (strain SC5314 / ATCC MYA-2876) (Yeast)).